Here is a 647-residue protein sequence, read N- to C-terminus: Acetyl-coenzyme A synthetase (647 aa).

CoA is bound by residues 190-193 (RGGR) and Thr310. ATP contacts are provided by residues 386-388 (GEP), 410-415 (DTWWQT), Asp499, and Arg514. Ser522 serves as a coordination point for CoA. Arg525 contributes to the ATP binding site. Val536, His538, and Val541 together coordinate Mg(2+). Position 583 (Arg583) interacts with CoA. Lys608 is subject to N6-acetyllysine.

Belongs to the ATP-dependent AMP-binding enzyme family. Requires Mg(2+) as cofactor. Acetylated. Deacetylation by the SIR2-homolog deacetylase activates the enzyme.

The enzyme catalyses acetate + ATP + CoA = acetyl-CoA + AMP + diphosphate. Catalyzes the conversion of acetate into acetyl-CoA (AcCoA), an essential intermediate at the junction of anabolic and catabolic pathways. AcsA undergoes a two-step reaction. In the first half reaction, AcsA combines acetate with ATP to form acetyl-adenylate (AcAMP) intermediate. In the second half reaction, it can then transfer the acetyl group from AcAMP to the sulfhydryl group of CoA, forming the product AcCoA. The chain is Acetyl-coenzyme A synthetase from Xylella fastidiosa (strain 9a5c).